Here is a 245-residue protein sequence, read N- to C-terminus: MAATSPVSRIFASLQPANSSALHTGDLENRAGIVVGQHGGREVQVSGSAELSAAPDRAQVCIAVSSSKGTAAEAKSSVQRRLEYIAQSLRQGGVTEENITVSKEFQRLSNTYKMEAVVCVVFSDFDKLQSNCNLLVEKLDSSVNISPPHFYHTADCLEKLRREVCLGAVANARRKAQEVCRLVGHSLGKALIIREEELREWEDQAESSQAHQSIQSKIKTATIYAASKILATFEIKGKERHKKNR.

It belongs to the IRAK1BP1 family.

It is found in the cytoplasm. The protein resides in the nucleus. Its function is as follows. May be part of a signaling pathway that leads to NF-kappa-B activation. The protein is Interleukin-1 receptor-associated kinase 1-binding protein 1 homolog (irak1bp1) of Xenopus laevis (African clawed frog).